The chain runs to 278 residues: MRIQFSKMHGLGNDFVVIDAIHQPVDLSPDQVRLLAHRRFGVGCDQVLLVERPSDPAAADFRYRIFNADGNEVEQCGNGARCFAVFVRERGLTAKDHIPVETAAGIIHLQVQPDGQVTVDMGPPRLKPWQIPFEAESAMTSYPLEVEGETYEIGAVSMGNPHAVLRVDNVQTAPVARLGPLIEAHPRFPRHVNVGFMQVVSPGEIRLRVYERGVGETLACGTGACAAVVSGRIQGLLDETVAVDLPGGRLVINWAGQEEAPVMMTGPATQVFTGSIDI.

Substrate is bound by residues Asn13, Gln46, and Asn67. Cys76 (proton donor) is an active-site residue. Residues 77–78, Asn160, Asn193, and 211–212 each bind substrate; these read GN and ER. Residue Cys220 is the Proton acceptor of the active site. 221-222 lines the substrate pocket; sequence GT.

Belongs to the diaminopimelate epimerase family. As to quaternary structure, homodimer.

The protein localises to the cytoplasm. It catalyses the reaction (2S,6S)-2,6-diaminopimelate = meso-2,6-diaminopimelate. Its pathway is amino-acid biosynthesis; L-lysine biosynthesis via DAP pathway; DL-2,6-diaminopimelate from LL-2,6-diaminopimelate: step 1/1. In terms of biological role, catalyzes the stereoinversion of LL-2,6-diaminopimelate (L,L-DAP) to meso-diaminopimelate (meso-DAP), a precursor of L-lysine and an essential component of the bacterial peptidoglycan. This Thioalkalivibrio sulfidiphilus (strain HL-EbGR7) protein is Diaminopimelate epimerase.